The primary structure comprises 145 residues: Trafficking protein particle complex subunit 1 (145 aa).

This sequence belongs to the TRAPP small subunits family. BET5 subfamily. As to quaternary structure, part of the multisubunit transport protein particle (TRAPP) complex. The heterodimer TRAPPC6B-TRAPPC3 interacts with TRAPPC1 likely providing a core for TRAPP complex formation.

The protein localises to the golgi apparatus. The protein resides in the cis-Golgi network. Its subcellular location is the endoplasmic reticulum. In terms of biological role, may play a role in vesicular transport from endoplasmic reticulum to Golgi. In Bos taurus (Bovine), this protein is Trafficking protein particle complex subunit 1 (TRAPPC1).